Here is a 269-residue protein sequence, read N- to C-terminus: Shikimate dehydrogenase (NADP(+)) (269 aa).

Residues Ser-14–Ser-16 and Thr-61 each bind shikimate. The active-site Proton acceptor is Lys-65. Positions 85 and 98 each coordinate shikimate. NADP(+) contacts are provided by residues Gly-120–Ala-124, Asn-143–Lys-148, and Thr-211. Tyr-213 is a binding site for shikimate. NADP(+) is bound at residue Gly-234.

Belongs to the shikimate dehydrogenase family. As to quaternary structure, homodimer.

The enzyme catalyses shikimate + NADP(+) = 3-dehydroshikimate + NADPH + H(+). The protein operates within metabolic intermediate biosynthesis; chorismate biosynthesis; chorismate from D-erythrose 4-phosphate and phosphoenolpyruvate: step 4/7. Functionally, involved in the biosynthesis of the chorismate, which leads to the biosynthesis of aromatic amino acids. Catalyzes the reversible NADPH linked reduction of 3-dehydroshikimate (DHSA) to yield shikimate (SA). This chain is Shikimate dehydrogenase (NADP(+)), found in Archaeoglobus fulgidus (strain ATCC 49558 / DSM 4304 / JCM 9628 / NBRC 100126 / VC-16).